We begin with the raw amino-acid sequence, 274 residues long: 2,3,4,5-tetrahydropyridine-2,6-dicarboxylate N-succinyltransferase (274 aa).

Arginine 104 and aspartate 141 together coordinate substrate.

Belongs to the transferase hexapeptide repeat family. In terms of assembly, homotrimer.

It localises to the cytoplasm. It carries out the reaction (S)-2,3,4,5-tetrahydrodipicolinate + succinyl-CoA + H2O = (S)-2-succinylamino-6-oxoheptanedioate + CoA. Its pathway is amino-acid biosynthesis; L-lysine biosynthesis via DAP pathway; LL-2,6-diaminopimelate from (S)-tetrahydrodipicolinate (succinylase route): step 1/3. The sequence is that of 2,3,4,5-tetrahydropyridine-2,6-dicarboxylate N-succinyltransferase from Shigella boydii serotype 4 (strain Sb227).